Consider the following 1821-residue polypeptide: PH-interacting protein (1821 aa).

Residue Ser136 is modified to Phosphoserine. WD repeat units follow at residues 181–222 (GHLS…ATLR), 224–262 (HAAE…PLAV), 265–310 (GHSA…INPR), 319–360 (RPGV…KISE), and 363–402 (FHTD…WKSI). Lys421 participates in a covalent cross-link: Glycyl lysine isopeptide (Lys-Gly) (interchain with G-Cter in SUMO2). WD repeat units follow at residues 422–461 (ITKM…LIHV), 464–504 (GHED…KVRS), and 512–551 (QGHG…KYDK). Ser641, Ser659, Ser674, Ser677, Ser683, and Ser692 each carry phosphoserine. 2 disordered regions span residues 653 to 695 (EQDL…SGQI) and 782 to 927 (DLGD…RLAV). Residues 665–681 (SNASRVNRGSVSSTSEV) are compositionally biased toward polar residues. A compositionally biased stretch (basic and acidic residues) spans 800–810 (SALEETPRPLE). Over residues 841–854 (SDGSSSDYSSDYSD) the composition is skewed to low complexity. Residues Ser879, Ser880, Ser881, and Ser911 each carry the phosphoserine modification. A compositionally biased stretch (basic residues) spans 912-924 (PKKKKPKERKQKR). The mediates interaction with IRS1 stretch occupies residues 924–1129 (RLAVGELTEN…MELIPNNAVF (206 aa)). The 108-residue stretch at 1156-1263 (WGANPRDEEC…DLLLHFIKDQ (108 aa)) folds into the Bromo 1 domain. Phosphoserine is present on residues Ser1281, Ser1283, and Ser1296. Residues 1282 to 1310 (DSEEEEKDADVPGTSTRKRKDHQPRRRLR) are disordered. A compositionally biased stretch (basic residues) spans 1297 to 1310 (TRKRKDHQPRRRLR). Ser1315 is modified (phosphoserine). The 106-residue stretch at 1316-1421 (YDIQAWKKQC…AFFEEHISSV (106 aa)) folds into the Bromo 2 domain. Thr1359 carries the phosphothreonine modification. Ser1405 is modified (phosphoserine). Residues 1435–1446 (NTISKKRKKRNR) are compositionally biased toward basic residues. The interval 1435–1507 (NTISKKRKKR…PESSSVVRTR (73 aa)) is disordered. Residues 1447–1457 (SSSLSSSAASS) are compositionally biased toward low complexity. Residue Lys1470 forms a Glycyl lysine isopeptide (Lys-Gly) (interchain with G-Cter in SUMO1); alternate linkage. Residue Lys1470 forms a Glycyl lysine isopeptide (Lys-Gly) (interchain with G-Cter in SUMO2); alternate linkage. Positions 1471–1482 (SEVSTSPFSIPT) are enriched in polar residues. Residue Ser1479 is modified to Phosphoserine. Lys1497 carries the post-translational modification N6-acetyllysine. Position 1525 is a phosphoserine (Ser1525). The residue at position 1533 (Lys1533) is an N6-acetyllysine. Polar residues predominate over residues 1556–1576 (STLSSPDPLTFSHATKNNSAK). 3 disordered regions span residues 1556–1596 (STLS…VFSK), 1623–1676 (QVNG…NSEQ), and 1740–1785 (RSNR…DSEE). Ser1560 carries the post-translational modification Phosphoserine. A Glycyl lysine isopeptide (Lys-Gly) (interchain with G-Cter in SUMO2) cross-link involves residue Lys1644. Residue Ser1651 is modified to Phosphoserine. A Glycyl lysine isopeptide (Lys-Gly) (interchain with G-Cter in SUMO2) cross-link involves residue Lys1670. Ser1762 and Ser1783 each carry phosphoserine.

As to quaternary structure, interacts (via bromo domain) with acetylated lysine residues on histone H1.4, histone H3 and H4 (in vitro). Interacts with IRS1 and IRS2. Widely expressed with most abundant expression detected in pancreatic islets, brain and skeletal muscle. Predominantly expressed in developing and regenerating neurons. Expressed in adult brain (granular layer of the olfactorium bulb, hippocampus, dentate gyrus and cerebellum internal granular layer). Expressed in the CA3 region of adult hippocampus, adult and fetal retina, perinatal dorsal root ganglion and embryonal olfactory epithelia (at protein level).

The protein resides in the nucleus. Its function is as follows. Probable regulator of the insulin and insulin-like growth factor signaling pathways. Stimulates cell proliferation through regulation of cyclin transcription and has an anti-apoptotic activity through AKT1 phosphorylation and activation. Plays a role in the regulation of cell morphology and cytoskeletal organization. The polypeptide is PH-interacting protein (Phip) (Mus musculus (Mouse)).